A 66-amino-acid polypeptide reads, in one-letter code: Kappa-flavitoxin (66 aa).

5 disulfides stabilise this stretch: Cys3–Cys21, Cys14–Cys42, Cys27–Cys31, Cys46–Cys58, and Cys59–Cys64.

Belongs to the three-finger toxin family. Long-chain subfamily. Kappa-neurotoxin sub-subfamily. In terms of assembly, homo- and heterodimer; non-covalently linked. In terms of tissue distribution, expressed by the venom gland.

It is found in the secreted. Postsynaptic neurotoxin that binds and inhibits neuronal nicotinic acetylcholine receptors (nAChR) with high affinity (IC(50)&lt;100 nM). Is a selective, and slowly reversible antagonist of alpha-3/CHRNA3-containing and some alpha-4/CHRNA4-containing AChRs. In Bungarus flaviceps flaviceps (Red-headed krait), this protein is Kappa-flavitoxin.